The chain runs to 194 residues: CASP-like protein 4C1 (194 aa).

Residues 1-35 (MRSPHAFRNGESPTLRDHTHFHSTVTAQKLRRFNS) are Cytoplasmic-facing. The helical transmembrane segment at 36–56 (LILLLRLASFSFSLASAVFML) threads the bilayer. The Extracellular portion of the chain corresponds to 57–74 (TNSRGSASPHWYDFDAFR). Residues 75–95 (FVFVANAIVALYSVFEMGTCV) form a helical membrane-spanning segment. Topologically, residues 96–114 (WEFSRETTLWPEAFQVWFD) are cytoplasmic. A helical membrane pass occupies residues 115–135 (FGHDQVFSYLLLSAGSAAAAL). Over 136 to 157 (ARTMRGGDTCTANKAFCLQSDV) the chain is Extracellular. A helical membrane pass occupies residues 158 to 178 (AIGLGFAAFLFLAFSSCFSGF). The Cytoplasmic segment spans residues 179–194 (RVACFLITGSRFHLYS).

This sequence belongs to the Casparian strip membrane proteins (CASP) family. Homodimer and heterodimers.

The protein localises to the cell membrane. In Arabidopsis thaliana (Mouse-ear cress), this protein is CASP-like protein 4C1.